The following is a 340-amino-acid chain: Ketol-acid reductoisomerase (NADP(+)) (340 aa).

One can recognise a KARI N-terminal Rossmann domain in the interval 3-182; that stretch reads VEMLYEADVK…GSARVGLLVT (180 aa). Residues 26-29, Arg-49, Ser-53, and 83-86 contribute to the NADP(+) site; these read YGSQ and DEIQ. His-108 is an active-site residue. Residue Gly-134 coordinates NADP(+). One can recognise a KARI C-terminal knotted domain in the interval 183–328; sequence TFKEETEEDL…AELRKAMPFV (146 aa). Mg(2+) contacts are provided by Asp-191, Glu-195, Glu-227, and Glu-231. Ser-252 serves as a coordination point for substrate.

Belongs to the ketol-acid reductoisomerase family. Mg(2+) is required as a cofactor.

The enzyme catalyses (2R)-2,3-dihydroxy-3-methylbutanoate + NADP(+) = (2S)-2-acetolactate + NADPH + H(+). It carries out the reaction (2R,3R)-2,3-dihydroxy-3-methylpentanoate + NADP(+) = (S)-2-ethyl-2-hydroxy-3-oxobutanoate + NADPH + H(+). The protein operates within amino-acid biosynthesis; L-isoleucine biosynthesis; L-isoleucine from 2-oxobutanoate: step 2/4. It participates in amino-acid biosynthesis; L-valine biosynthesis; L-valine from pyruvate: step 2/4. In terms of biological role, involved in the biosynthesis of branched-chain amino acids (BCAA). Catalyzes an alkyl-migration followed by a ketol-acid reduction of (S)-2-acetolactate (S2AL) to yield (R)-2,3-dihydroxy-isovalerate. In the isomerase reaction, S2AL is rearranged via a Mg-dependent methyl migration to produce 3-hydroxy-3-methyl-2-ketobutyrate (HMKB). In the reductase reaction, this 2-ketoacid undergoes a metal-dependent reduction by NADPH to yield (R)-2,3-dihydroxy-isovalerate. The chain is Ketol-acid reductoisomerase (NADP(+)) from Streptococcus mutans serotype c (strain ATCC 700610 / UA159).